Reading from the N-terminus, the 93-residue chain is Bacterial microcompartment shell protein PduA (93 aa).

Residues 5–89 (ALGMVETKGL…PHTDVEKILP (85 aa)) enclose the BMC domain.

This sequence belongs to the bacterial microcompartments protein family. As to quaternary structure, homohexamer with a central pore; Lys-26 and Arg-79 interactions are very important for hexamer symmetry. The hexamers pack against each other in arrays. Interacts individually with shell proteins PduB, PduB', PduJ, PduK, PduN and PduU. Modeling suggests PduC, PduD, PduE, PduL and PduP interact with a cleft formed by the C-terminal segments of 2 adjacent PduA subunits (on the BMC luminal side) in the hexamer.

Its subcellular location is the bacterial microcompartment. Its pathway is polyol metabolism; 1,2-propanediol degradation. One of the major shell proteins of the bacterial microcompartment (BMC) dedicated to 1,2-propanediol (1,2-PD) degradation, probably important for metabolite diffusion into and out of the BMC. Overexpression of a C-terminally mutated form (PduA*) makes thin parallel filaments with a honeycomb-like assembly in cross-section that probably form nanotubes. The filaments interfere with septation. PduA is probably the hub for binding multiple enzymes to the interior of the BMC. At least one of PduA or PduJ is required for BMC assembly; it must be encoded as the first gene in the pdu operon. Its function is as follows. Expression of a cosmid containing the full 21-gene pdu operon in E.coli allows E.coli to grow on 1,2-PD with the appearance of BMCs in its cytoplasm. Overexpression of this protein leads to aberrant intracellular filaments. Functionally, the 1,2-PD-specific bacterial microcompartment (BMC) concentrates low levels of 1,2-PD catabolic enzymes, concentrates volatile reaction intermediates thus enhancing pathway flux and keeps the level of toxic, mutagenic propionaldehyde low. The chain is Bacterial microcompartment shell protein PduA from Citrobacter freundii.